The chain runs to 563 residues: Pentatricopeptide repeat-containing protein At4g39620, chloroplastic (563 aa).

Residues M1–T47 constitute a chloroplast transit peptide. PPR repeat units follow at residues D132–P166, D167–K197, N207–P241, D242–P276, D277–P311, T312–P346, S347–L381, K382–P416, and D417–P451. Disordered stretches follow at residues P468–K501 and N520–M551. The segment covering N520–Q537 has biased composition (basic and acidic residues).

The protein belongs to the PPR family. P subfamily.

The protein resides in the plastid. It localises to the chloroplast. Its function is as follows. Essential for embryo development. The polypeptide is Pentatricopeptide repeat-containing protein At4g39620, chloroplastic (Arabidopsis thaliana (Mouse-ear cress)).